The chain runs to 142 residues: Hemoglobin subunit alpha (142 aa).

S1 carries the N-acetylserine modification. Residues 1–142 (SLSDKDKAAV…VALALAERYR (142 aa)) form the Globin domain. H59 lines the O2 pocket. H88 lines the heme b pocket.

Belongs to the globin family. Heterotetramer of two alpha chains and two beta chains. Red blood cells.

In terms of biological role, involved in oxygen transport from gills to the various peripheral tissues. This is Hemoglobin subunit alpha (hba) from Gymnodraco acuticeps (Antarctic dragonfish).